We begin with the raw amino-acid sequence, 705 residues long: Elongation factor G (705 aa).

The tr-type G domain occupies 8-290 (AYYRNIGISA…AVIEYLPAPT (283 aa)). GTP is bound by residues 17–24 (AHIDAGKT), 88–92 (DTPGH), and 142–145 (NKMD).

It belongs to the TRAFAC class translation factor GTPase superfamily. Classic translation factor GTPase family. EF-G/EF-2 subfamily.

The protein localises to the cytoplasm. Functionally, catalyzes the GTP-dependent ribosomal translocation step during translation elongation. During this step, the ribosome changes from the pre-translocational (PRE) to the post-translocational (POST) state as the newly formed A-site-bound peptidyl-tRNA and P-site-bound deacylated tRNA move to the P and E sites, respectively. Catalyzes the coordinated movement of the two tRNA molecules, the mRNA and conformational changes in the ribosome. The sequence is that of Elongation factor G from Baumannia cicadellinicola subsp. Homalodisca coagulata.